Consider the following 353-residue polypeptide: uncharacterized protein (353 aa).

The N-terminal stretch at 1 to 23 (MSAGKGLLLVICLLFLPLKSAMA) is a signal peptide.

The protein to E.coli YqiI.

Its function is as follows. May be involved in a fimbrial system chaperoned by YbgP and exported by YbgQ. This is an uncharacterized protein from Escherichia coli (strain K12).